The primary structure comprises 525 residues: GMP synthase [glutamine-hydrolyzing] (525 aa).

Positions Pro16 to Asp205 constitute a Glutamine amidotransferase type-1 domain. Cys93 acts as the Nucleophile in catalysis. Catalysis depends on residues His179 and Glu181. The GMPS ATP-PPase domain maps to Trp206 to Arg399. Residue Ser233–Ala239 coordinates ATP.

In terms of assembly, homodimer.

It carries out the reaction XMP + L-glutamine + ATP + H2O = GMP + L-glutamate + AMP + diphosphate + 2 H(+). The protein operates within purine metabolism; GMP biosynthesis; GMP from XMP (L-Gln route): step 1/1. In terms of biological role, catalyzes the synthesis of GMP from XMP. The chain is GMP synthase [glutamine-hydrolyzing] from Mycolicibacterium paratuberculosis (strain ATCC BAA-968 / K-10) (Mycobacterium paratuberculosis).